A 97-amino-acid chain; its full sequence is Citrate lyase acyl carrier protein (97 aa).

Ser14 carries the O-(phosphoribosyl dephospho-coenzyme A)serine modification.

The protein belongs to the CitD family. In terms of assembly, oligomer with a subunit composition of (alpha,beta,gamma)6.

The protein resides in the cytoplasm. In terms of biological role, covalent carrier of the coenzyme of citrate lyase. This is Citrate lyase acyl carrier protein from Klebsiella pneumoniae subsp. pneumoniae (strain ATCC 700721 / MGH 78578).